A 1089-amino-acid polypeptide reads, in one-letter code: MPKRTDIKSILLIGSGPIVIGQACEFDYSGTQAAKTLKELGYRVVLINSNPATIMTDPEFADATYIEPITKESILSIIKKEKIDAILPTMGGQVALNVAMEVYESGLLGDVKFLGANPEAIKKGEDRQVFKECMKKIGMDLPKSMYAYNYDEALKAVDEIDFPLMIRASYTLGGAGSGVVYNMDEFKELTNTALALSPIHEILIEESLLGWKEYEMEVIRDRADNCIIVCSIENIDPMGVHTGDSITIAPALTLTDKEYQVMRNASFAILREIGVDTGGSNVQFAINPKNGRMIVIEMNPRVSRSSALASKATGYPIAKVATLLAVGFSLDEIKNDITGTPASFEPVIDYIVTKIPRFTFEKFPGANTTLGTAMKSVGEVMAIGRTFKESIQKALCSLERSLSGFDRVKFEDRNDLVFKIRNANEKRLLYVAQAFREGFSVEELYELCKIDPWFLTQIKEIVDFEEQIDMDILNNKALLRKAKTMGFSDKMIALLVNLKDNLELSQNDIYYVRMKQKIIAEFSEVDTCAGEFEALTPYLYSSINVSELTQSKNDAKDKKEKKVMIIGGGPNRIGQGIEFDYACVHASFALKDMGIKTIMYNCNPETVSTDYDTSDILYFEPIDFEHLRAVIEREKPDGVIVHFGGQTPLKFAKRLSAFGAKIIGTSARVIDMAEDRKKFAEFITKLGINQPKNSTATSVEEAVLKASDIGYPVLVRPSYVLGGRAMRVVNDEAELRLYMQEAVDVSDKSPVLIDQFLDNATEIDVDAICDGKDVYVAGIMEHIEEAGIHSGDSACSLPPCNIDEKMQEFIAQKTADIALNLGVVGLLNIQFALHNNELYMIEVNPRASRTIPFVSKATGIPLAKVATRVMWQGNLKEALKFYDTFKVVNFDTKILRPKTPKYMSVKEAVFPFAKLSGSDLELGPEMRSTGEVMGISKDFANSYAKSQIASFNHLPEQGVVFISLKDKDKKYTKKIAAEYVKLGFKLMATGGTCKEILESGFECELVHKISEGRPNVEDKLKNGEIHLVINTSDSHSFKGDTKKIRENIIRFKIPYFTNLRSALAGAKSIKAIQSKSCLDVKSLQEWLKS.

A carboxyphosphate synthetic domain region spans residues 1–399 (MPKRTDIKSI…SIQKALCSLE (399 aa)). ATP contacts are provided by Arg-127, Arg-167, Gly-173, Gly-174, Glu-206, Leu-208, Glu-213, Gly-239, Val-240, His-241, Gln-283, and Glu-297. The 196-residue stretch at 131–326 (KECMKKIGMD…IAKVATLLAV (196 aa)) folds into the ATP-grasp 1 domain. Positions 283, 297, and 299 each coordinate Mg(2+). Mn(2+) contacts are provided by Gln-283, Glu-297, and Asn-299. Residues 400–553 (RSLSGFDRVK…NVSELTQSKN (154 aa)) are oligomerization domain. The tract at residues 554 to 951 (DAKDKKEKKV…SYAKSQIASF (398 aa)) is carbamoyl phosphate synthetic domain. An ATP-grasp 2 domain is found at 680–871 (AEFITKLGIN…LAKVATRVMW (192 aa)). Positions 716, 755, 757, 762, 787, 788, 789, 790, 830, and 842 each coordinate ATP. The Mg(2+) site is built by Gln-830, Glu-842, and Asn-844. Residues Gln-830, Glu-842, and Asn-844 each coordinate Mn(2+). Positions 952 to 1089 (NHLPEQGVVF…VKSLQEWLKS (138 aa)) constitute an MGS-like domain. The interval 952 to 1089 (NHLPEQGVVF…VKSLQEWLKS (138 aa)) is allosteric domain.

Belongs to the CarB family. Composed of two chains; the small (or glutamine) chain promotes the hydrolysis of glutamine to ammonia, which is used by the large (or ammonia) chain to synthesize carbamoyl phosphate. Tetramer of heterodimers (alpha,beta)4. Requires Mg(2+) as cofactor. Mn(2+) serves as cofactor.

It carries out the reaction hydrogencarbonate + L-glutamine + 2 ATP + H2O = carbamoyl phosphate + L-glutamate + 2 ADP + phosphate + 2 H(+). The enzyme catalyses hydrogencarbonate + NH4(+) + 2 ATP = carbamoyl phosphate + 2 ADP + phosphate + 2 H(+). It functions in the pathway amino-acid biosynthesis; L-arginine biosynthesis; carbamoyl phosphate from bicarbonate: step 1/1. Its pathway is pyrimidine metabolism; UMP biosynthesis via de novo pathway; (S)-dihydroorotate from bicarbonate: step 1/3. In terms of biological role, large subunit of the glutamine-dependent carbamoyl phosphate synthetase (CPSase). CPSase catalyzes the formation of carbamoyl phosphate from the ammonia moiety of glutamine, carbonate, and phosphate donated by ATP, constituting the first step of 2 biosynthetic pathways, one leading to arginine and/or urea and the other to pyrimidine nucleotides. The large subunit (synthetase) binds the substrates ammonia (free or transferred from glutamine from the small subunit), hydrogencarbonate and ATP and carries out an ATP-coupled ligase reaction, activating hydrogencarbonate by forming carboxy phosphate which reacts with ammonia to form carbamoyl phosphate. The chain is Carbamoyl phosphate synthase large chain from Campylobacter jejuni subsp. jejuni serotype O:2 (strain ATCC 700819 / NCTC 11168).